A 490-amino-acid polypeptide reads, in one-letter code: Protein nucleotidyltransferase YdiU (490 aa).

ATP-binding residues include Gly-89, Gly-91, Arg-92, Lys-112, Asp-124, Gly-125, Arg-175, and Arg-182. Asp-251 functions as the Proton acceptor in the catalytic mechanism. Mg(2+) is bound by residues Asn-252 and Asp-261. Asp-261 contributes to the ATP binding site.

This sequence belongs to the SELO family. Mg(2+) is required as a cofactor. It depends on Mn(2+) as a cofactor.

The enzyme catalyses L-seryl-[protein] + ATP = 3-O-(5'-adenylyl)-L-seryl-[protein] + diphosphate. The catalysed reaction is L-threonyl-[protein] + ATP = 3-O-(5'-adenylyl)-L-threonyl-[protein] + diphosphate. It carries out the reaction L-tyrosyl-[protein] + ATP = O-(5'-adenylyl)-L-tyrosyl-[protein] + diphosphate. It catalyses the reaction L-histidyl-[protein] + UTP = N(tele)-(5'-uridylyl)-L-histidyl-[protein] + diphosphate. The enzyme catalyses L-seryl-[protein] + UTP = O-(5'-uridylyl)-L-seryl-[protein] + diphosphate. The catalysed reaction is L-tyrosyl-[protein] + UTP = O-(5'-uridylyl)-L-tyrosyl-[protein] + diphosphate. Its function is as follows. Nucleotidyltransferase involved in the post-translational modification of proteins. It can catalyze the addition of adenosine monophosphate (AMP) or uridine monophosphate (UMP) to a protein, resulting in modifications known as AMPylation and UMPylation. This is Protein nucleotidyltransferase YdiU from Vibrio vulnificus (strain YJ016).